The sequence spans 382 residues: Dual-specificity RNA methyltransferase RlmN (382 aa).

The Proton acceptor role is filled by Glu96. Residues 102 to 342 form the Radical SAM core domain; the sequence is QGKRGTLCVS…VRTTRGEDID (241 aa). Cysteines 109 and 345 form a disulfide. [4Fe-4S] cluster is bound by residues Cys116, Cys120, and Cys123. S-adenosyl-L-methionine is bound by residues 170-171, Ser202, 224-226, and Asn302; these read GE and SLH. Cys345 serves as the catalytic S-methylcysteine intermediate.

This sequence belongs to the radical SAM superfamily. RlmN family. Requires [4Fe-4S] cluster as cofactor.

The protein resides in the cytoplasm. It catalyses the reaction adenosine(2503) in 23S rRNA + 2 reduced [2Fe-2S]-[ferredoxin] + 2 S-adenosyl-L-methionine = 2-methyladenosine(2503) in 23S rRNA + 5'-deoxyadenosine + L-methionine + 2 oxidized [2Fe-2S]-[ferredoxin] + S-adenosyl-L-homocysteine. The catalysed reaction is adenosine(37) in tRNA + 2 reduced [2Fe-2S]-[ferredoxin] + 2 S-adenosyl-L-methionine = 2-methyladenosine(37) in tRNA + 5'-deoxyadenosine + L-methionine + 2 oxidized [2Fe-2S]-[ferredoxin] + S-adenosyl-L-homocysteine. Its function is as follows. Specifically methylates position 2 of adenine 2503 in 23S rRNA and position 2 of adenine 37 in tRNAs. m2A2503 modification seems to play a crucial role in the proofreading step occurring at the peptidyl transferase center and thus would serve to optimize ribosomal fidelity. The protein is Dual-specificity RNA methyltransferase RlmN of Pseudomonas fluorescens (strain SBW25).